Reading from the N-terminus, the 472-residue chain is Siroheme synthase 2 (472 aa).

Residues 1 to 204 (MDYFPIFCQL…EDQVQVEQHV (204 aa)) form a precorrin-2 dehydrogenase /sirohydrochlorin ferrochelatase region. Residues 22–23 (EV) and 43–44 (CE) each bind NAD(+). Ser128 carries the post-translational modification Phosphoserine. Positions 216 to 472 (GEVVLVGAGP…GMKEQVERVG (257 aa)) are uroporphyrinogen-III C-methyltransferase. Pro225 contributes to the S-adenosyl-L-methionine binding site. Asp248 functions as the Proton acceptor in the catalytic mechanism. The active-site Proton donor is the Lys270. Residues 301–303 (GGD), Ile306, 331–332 (TA), Met382, and Gly411 contribute to the S-adenosyl-L-methionine site.

It in the N-terminal section; belongs to the precorrin-2 dehydrogenase / sirohydrochlorin ferrochelatase family. In the C-terminal section; belongs to the precorrin methyltransferase family.

The enzyme catalyses uroporphyrinogen III + 2 S-adenosyl-L-methionine = precorrin-2 + 2 S-adenosyl-L-homocysteine + H(+). It carries out the reaction precorrin-2 + NAD(+) = sirohydrochlorin + NADH + 2 H(+). It catalyses the reaction siroheme + 2 H(+) = sirohydrochlorin + Fe(2+). Its pathway is cofactor biosynthesis; adenosylcobalamin biosynthesis; precorrin-2 from uroporphyrinogen III: step 1/1. It functions in the pathway cofactor biosynthesis; adenosylcobalamin biosynthesis; sirohydrochlorin from precorrin-2: step 1/1. It participates in porphyrin-containing compound metabolism; siroheme biosynthesis; precorrin-2 from uroporphyrinogen III: step 1/1. The protein operates within porphyrin-containing compound metabolism; siroheme biosynthesis; siroheme from sirohydrochlorin: step 1/1. Its pathway is porphyrin-containing compound metabolism; siroheme biosynthesis; sirohydrochlorin from precorrin-2: step 1/1. In terms of biological role, multifunctional enzyme that catalyzes the SAM-dependent methylations of uroporphyrinogen III at position C-2 and C-7 to form precorrin-2 via precorrin-1. Then it catalyzes the NAD-dependent ring dehydrogenation of precorrin-2 to yield sirohydrochlorin. Finally, it catalyzes the ferrochelation of sirohydrochlorin to yield siroheme. This Yersinia enterocolitica serotype O:8 / biotype 1B (strain NCTC 13174 / 8081) protein is Siroheme synthase 2.